A 119-amino-acid chain; its full sequence is Large ribosomal subunit protein bL20 (119 aa).

It belongs to the bacterial ribosomal protein bL20 family.

In terms of biological role, binds directly to 23S ribosomal RNA and is necessary for the in vitro assembly process of the 50S ribosomal subunit. It is not involved in the protein synthesizing functions of that subunit. The polypeptide is Large ribosomal subunit protein bL20 (Streptococcus agalactiae serotype Ia (strain ATCC 27591 / A909 / CDC SS700)).